A 207-amino-acid polypeptide reads, in one-letter code: Histone H1 (207 aa).

Residues 1–15 show a composition bias toward low complexity; sequence MAEVAPAPAAAAPAK. Disordered regions lie at residues 1–28 and 105–207; these read MAEV…PKKA and EAKK…PKKK. A2 is subject to N-acetylalanine. Positions 16–27 are enriched in basic residues; the sequence is APKKKAAAKPKK. The H15 domain occupies 28 to 101; that stretch reads AGPSVGELIV…GASGSFKLNK (74 aa). Composition is skewed to basic residues over residues 117–168 and 175–207; these read KAKK…KVKK and KAAK…PKKK.

The protein belongs to the histone H1/H5 family. As to expression, oncorhyncin II is expressed in skin.

It localises to the nucleus. Its subcellular location is the chromosome. It is found in the secreted. Histones H1 are necessary for the condensation of nucleosome chains into higher-order structures. In terms of biological role, oncorhyncin II has antibacterial activity against Gram-positive and Gram-negative bacteria at submicromolar concentrations. Potentially important role in mucosal defense. The protein is Histone H1 of Oncorhynchus mykiss (Rainbow trout).